Consider the following 220-residue polypeptide: Deep-sea actinoporin Cjtox I (220 aa).

Positions M1 to A19 are cleaved as a signal peptide. A propeptide spanning residues L20–K42 is cleaved from the precursor. Positions 96, 128, 146, 148, 174, 178, and 179 each coordinate phosphocholine. The tract at residues S146–K161 is trp-rich region, which is important for the binding to lipid membrane. Positions K185–N187 match the Cell attachment site, crucial for protein stability motif.

It belongs to the actinoporin family. Sea anemone subfamily. Octamer or nonamer in membranes. Monomer in the soluble state. Expressed in tentacles.

The protein localises to the secreted. It is found in the nematocyst. The protein resides in the target cell membrane. Its function is as follows. Probably acts in predation. Pore-forming protein that forms cations-selective hydrophilic pores of around 1 nm and causes cytolysis. Pore formation is a multi-step process that involves specific recognition of membrane sphingomyelin (but neither cholesterol nor phosphatidylcholine) using aromatic rich region and adjacent phosphocholine (POC) binding site, firm binding to the membrane (mainly driven by hydrophobic interactions) accompanied by the transfer of the N-terminal region to the lipid-water interface and finally pore formation after oligomerization of monomers. Shows hemolytic activity on equine erythrocytes. Hemolysis is moderately inhibited in presence of sphingomyelin, suggesting that this protein targets sphingomyelin. The protein is Deep-sea actinoporin Cjtox I of Cribrinopsis japonica (Deep-sea anemone).